The chain runs to 499 residues: Long chain base biosynthesis protein 2b (499 aa).

The chain crosses the membrane as a helical span at residues 5-25 (VPYVTAATTLFSFGLIFGFGH). K322 is modified (N6-(pyridoxal phosphate)lysine).

This sequence belongs to the class-II pyridoxal-phosphate-dependent aminotransferase family. In terms of assembly, heterodimer with LCB1. Component of the serine palmitoyltransferase (SPT) complex, composed of LCB1 and LCB2. Pyridoxal 5'-phosphate is required as a cofactor.

The protein localises to the endoplasmic reticulum membrane. It carries out the reaction L-serine + hexadecanoyl-CoA + H(+) = 3-oxosphinganine + CO2 + CoA. It participates in lipid metabolism; sphingolipid metabolism. Serine palmitoyltransferase (SPT). The heterodimer formed with LCB1 constitutes the catalytic core. This chain is Long chain base biosynthesis protein 2b, found in Oryza sativa subsp. japonica (Rice).